Here is a 356-residue protein sequence, read N- to C-terminus: Uroporphyrinogen decarboxylase (356 aa).

Substrate contacts are provided by residues 25–29, Asp75, Tyr152, Thr207, and His326; that span reads RQAGR.

This sequence belongs to the uroporphyrinogen decarboxylase family. Homodimer.

It localises to the cytoplasm. The catalysed reaction is uroporphyrinogen III + 4 H(+) = coproporphyrinogen III + 4 CO2. The protein operates within porphyrin-containing compound metabolism; protoporphyrin-IX biosynthesis; coproporphyrinogen-III from 5-aminolevulinate: step 4/4. Catalyzes the decarboxylation of four acetate groups of uroporphyrinogen-III to yield coproporphyrinogen-III. This Magnetococcus marinus (strain ATCC BAA-1437 / JCM 17883 / MC-1) protein is Uroporphyrinogen decarboxylase.